The following is an 808-amino-acid chain: Leucine--tRNA ligase (808 aa).

The 'HIGH' region motif lies at 40 to 51 (PYPSGQGLHVGH). Residues 580–584 (KMSKS) carry the 'KMSKS' region motif. ATP is bound at residue lysine 583.

This sequence belongs to the class-I aminoacyl-tRNA synthetase family.

Its subcellular location is the cytoplasm. The enzyme catalyses tRNA(Leu) + L-leucine + ATP = L-leucyl-tRNA(Leu) + AMP + diphosphate. The polypeptide is Leucine--tRNA ligase (Leuconostoc mesenteroides subsp. mesenteroides (strain ATCC 8293 / DSM 20343 / BCRC 11652 / CCM 1803 / JCM 6124 / NCDO 523 / NBRC 100496 / NCIMB 8023 / NCTC 12954 / NRRL B-1118 / 37Y)).